Reading from the N-terminus, the 375-residue chain is 4-hydroxy-3-methylbut-2-en-1-yl diphosphate synthase (flavodoxin) (375 aa).

The [4Fe-4S] cluster site is built by cysteine 268, cysteine 271, cysteine 303, and glutamate 310.

Belongs to the IspG family. Requires [4Fe-4S] cluster as cofactor.

It carries out the reaction (2E)-4-hydroxy-3-methylbut-2-enyl diphosphate + oxidized [flavodoxin] + H2O + 2 H(+) = 2-C-methyl-D-erythritol 2,4-cyclic diphosphate + reduced [flavodoxin]. Its pathway is isoprenoid biosynthesis; isopentenyl diphosphate biosynthesis via DXP pathway; isopentenyl diphosphate from 1-deoxy-D-xylulose 5-phosphate: step 5/6. Its function is as follows. Converts 2C-methyl-D-erythritol 2,4-cyclodiphosphate (ME-2,4cPP) into 1-hydroxy-2-methyl-2-(E)-butenyl 4-diphosphate. The chain is 4-hydroxy-3-methylbut-2-en-1-yl diphosphate synthase (flavodoxin) from Bacillus velezensis (strain DSM 23117 / BGSC 10A6 / LMG 26770 / FZB42) (Bacillus amyloliquefaciens subsp. plantarum).